The primary structure comprises 253 residues: Discoidin-1 subunit A (253 aa).

S2 bears the N-acetylserine mark. The F5/8 type C domain occupies 2 to 152 (STQGLVQLLA…ISLRCEFYTQ (151 aa)). Positions 79–81 (RGD) match the Cell attachment site motif.

Tetramer of four different chains (A to D). In terms of tissue distribution, stalk cells.

The protein localises to the cytoplasm. Functionally, galactose- and N-acetylgalactosamine-binding lectin. May play a role in cell-substratum adhesion rather than in cell-cell adhesion. May be necessary for the maintenance of normal elongate morphology during aggregation. This chain is Discoidin-1 subunit A (dscA-1), found in Dictyostelium discoideum (Social amoeba).